A 406-amino-acid chain; its full sequence is Argininosuccinate synthase (406 aa).

Residues 12-20 (AYSGGLDTS) and A39 contribute to the ATP site. Positions 90 and 95 each coordinate L-citrulline. ATP is bound at residue G120. Residues T122, N126, and D127 each coordinate L-aspartate. N126 provides a ligand contact to L-citrulline. Residues R130, S179, S188, E264, and Y276 each coordinate L-citrulline.

The protein belongs to the argininosuccinate synthase family. Type 1 subfamily. Homotetramer.

It localises to the cytoplasm. It carries out the reaction L-citrulline + L-aspartate + ATP = 2-(N(omega)-L-arginino)succinate + AMP + diphosphate + H(+). Its pathway is amino-acid biosynthesis; L-arginine biosynthesis; L-arginine from L-ornithine and carbamoyl phosphate: step 2/3. This is Argininosuccinate synthase from Citrifermentans bemidjiense (strain ATCC BAA-1014 / DSM 16622 / JCM 12645 / Bem) (Geobacter bemidjiensis).